Here is a 483-residue protein sequence, read N- to C-terminus: Glutamyl-tRNA(Gln) amidotransferase subunit A (483 aa).

Catalysis depends on charge relay system residues Lys-76 and Ser-151. Ser-175 (acyl-ester intermediate) is an active-site residue.

Belongs to the amidase family. GatA subfamily. As to quaternary structure, heterotrimer of A, B and C subunits.

The enzyme catalyses L-glutamyl-tRNA(Gln) + L-glutamine + ATP + H2O = L-glutaminyl-tRNA(Gln) + L-glutamate + ADP + phosphate + H(+). Allows the formation of correctly charged Gln-tRNA(Gln) through the transamidation of misacylated Glu-tRNA(Gln) in organisms which lack glutaminyl-tRNA synthetase. The reaction takes place in the presence of glutamine and ATP through an activated gamma-phospho-Glu-tRNA(Gln). This is Glutamyl-tRNA(Gln) amidotransferase subunit A from Chromobacterium violaceum (strain ATCC 12472 / DSM 30191 / JCM 1249 / CCUG 213 / NBRC 12614 / NCIMB 9131 / NCTC 9757 / MK).